We begin with the raw amino-acid sequence, 108 residues long: Protein translation factor SUI1 (108 aa).

A disordered region spans residues 1 to 20; the sequence is MSIENLKSFDPFADTGDDEA.

The protein belongs to the SUI1 family.

Its function is as follows. Additional factor that functions in concert with eIF-2 and the initiator tRNA in directing the ribosome to the proper start site of translation. In Eremothecium gossypii (strain ATCC 10895 / CBS 109.51 / FGSC 9923 / NRRL Y-1056) (Yeast), this protein is Protein translation factor SUI1 (SUI1A).